A 1711-amino-acid polypeptide reads, in one-letter code: Hybrid PKS-NRPS synthetase TAS1 (1711 aa).

Positions alanine 43 to valine 397 are condensation (C) domain. The adenylation (A) domain stretch occupies residues glutamine 506 to asparagine 907. A Carrier 1 domain is found at leucine 1043–arginine 1119. Residue serine 1079 is modified to O-(pantetheine 4'-phosphoryl)serine. Over residues leucine 1114–threonine 1127 the composition is skewed to polar residues. The interval leucine 1114–aspartate 1159 is disordered. The span at valine 1128 to threonine 1140 shows a compositional bias: basic residues. Residues aspartate 1159–threonine 1236 form the Carrier 2 domain. Serine 1195 carries the post-translational modification O-(pantetheine 4'-phosphoryl)serine. The Ketosynthase family 3 (KS3) domain maps to arginine 1266–alanine 1683. Active-site for beta-ketoacyl synthase activity residues include cysteine 1429, histidine 1565, and asparagine 1608.

The protein in the N-terminal section; belongs to the NRP synthetase family. Requires pantetheine 4'-phosphate as cofactor.

It carries out the reaction acetoacetyl-CoA + L-isoleucine + ATP = tenuazonic acid + AMP + diphosphate + CoA + 2 H(+). Hybrid PKS-NRPS synthetase that mediates the biosynthesis of the toxin tenuazonic acid (TeA), an inhibitor of protein biosynthesis on ribosomes by suppressing the release of new protein. TAS1 alone is sufficient for TeA synthesis via the condensation of isoleucine (Ile) with acetoacetyl-CoA by the N-terminal NRPS module and subsequent cyclization conducted by the C-terminal KS domain. In Botryobasidium botryosum (strain FD-172 SS1), this protein is Hybrid PKS-NRPS synthetase TAS1.